The sequence spans 349 residues: N-acetyltaurine hydrolase (349 aa).

The a divalent metal cation site is built by His-26, His-28, Glu-169, His-201, His-230, and Asp-298.

The protein belongs to the metallo-dependent hydrolases superfamily. Phosphotriesterase family. A divalent metal cation is required as a cofactor.

The protein resides in the cytoplasm. It localises to the cytosol. It catalyses the reaction N-acetyltaurine + H2O = taurine + acetate. The enzyme catalyses N-propanoyltaurine + H2O = propanoate + taurine. The catalysed reaction is N-acetyl-L-methionine + H2O = L-methionine + acetate. It carries out the reaction N-acetyl-L-isoleucine + H2O = L-isoleucine + acetate. It catalyses the reaction N-acetyl-L-leucine + H2O = L-leucine + acetate. The enzyme catalyses N-acetyl-L-valine + H2O = L-valine + acetate. N-acetyltaurine hydrolase that regulates feeding by catalyzing the hydrolysis of N-acetyltaurine into taurine and acetate. N-acetyltaurine has anorexigenic and anti-obesity effects that are dependent on GFRAL receptor and GDF15. PTER also acts on other N-acetyl amino acids (Met, Ile, Leu, Val) and N-propionyltaurine, but at lower rates. The sequence is that of N-acetyltaurine hydrolase from Homo sapiens (Human).